The primary structure comprises 336 residues: Atypical chemokine receptor 1 (336 aa).

Residues 1–63 are Extracellular-facing; sequence MGNCLHQAEL…CNLLDDSSLP (63 aa). Residues asparagine 16, asparagine 27, and asparagine 33 are each glycosylated (N-linked (GlcNAc...) asparagine). Disulfide bonds link cysteine 51/cysteine 276 and cysteine 129/cysteine 195. A helical transmembrane segment spans residues 64-84; that stretch reads FFILASVLGILASSTVLFLLF. At 85-95 the chain is on the cytoplasmic side; sequence RPLFRWQLCPG. The chain crosses the membrane as a helical span at residues 96–116; that stretch reads WPVLAQLAVGSTLFSIVVPIL. Topologically, residues 117-129 are extracellular; sequence APGLGNTRSSAPC. Residues 130 to 153 form a helical membrane-spanning segment; it reads SLGYCVWYGSAFAQALLLGCHASL. Over 154–166 the chain is Cytoplasmic; the sequence is GPKLGAGQVPGLT. Residues 167 to 187 form a helical membrane-spanning segment; the sequence is LGLSVGLWGAAALLTLPITLA. Residues 188 to 207 lie on the Extracellular side of the membrane; that stretch reads SDASDGLCTPIYSTELKALQ. The chain crosses the membrane as a helical span at residues 208 to 228; the sequence is ATHTVACFAIFVLLPLGLFGA. Over 229 to 244 the chain is Cytoplasmic; the sequence is KGLKKVLGMGPGPWMN. The helical transmembrane segment at 245–265 threads the bilayer; it reads ILWVWFIFWWPHGVVLGLDFL. Over 266 to 287 the chain is Extracellular; sequence VRSKLLLLPTCLAQQVLDLLLN. Residues 288–308 traverse the membrane as a helical segment; sequence LAEALAIVHCVATPLLLALFC. The Cytoplasmic portion of the chain corresponds to 309–336; the sequence is HQATRTLVPSLPLPERWSSPVDTLGSKS.

Belongs to the G-protein coupled receptor 1 family. Atypical chemokine receptor subfamily.

Its subcellular location is the early endosome. The protein localises to the recycling endosome. It localises to the membrane. Atypical chemokine receptor that controls chemokine levels and localization via high-affinity chemokine binding that is uncoupled from classic ligand-driven signal transduction cascades, resulting instead in chemokine sequestration, degradation, or transcytosis. Also known as interceptor (internalizing receptor) or chemokine-scavenging receptor or chemokine decoy receptor. Has a promiscuous chemokine-binding profile, interacting with inflammatory chemokines of both the CXC and the CC subfamilies but not with homeostatic chemokines. Acts as a receptor for chemokines including CCL2, CCL5, CCL7, CCL11, CCL13, CCL14, CCL17, CXCL5, CXCL6, IL8/CXCL8, CXCL11, GRO, RANTES, MCP-1 and TARC. May regulate chemokine bioavailability and, consequently, leukocyte recruitment through two distinct mechanisms: when expressed in endothelial cells, it sustains the abluminal to luminal transcytosis of tissue-derived chemokines and their subsequent presentation to circulating leukocytes; when expressed in erythrocytes, serves as blood reservoir of cognate chemokines but also as a chemokine sink, buffering potential surges in plasma chemokine levels. This is Atypical chemokine receptor 1 (ACKR1) from Saguinus imperator (Emperor tamarin).